We begin with the raw amino-acid sequence, 645 residues long: MHKELYPVNSEVAKKAWIDEAKYKAMYERSIQDNEAFWAEQAERLDWIKKWDKVKEVSFKKPVSIKWYLGGKMNVSYNCVDRHLKTRGDKTALLWEADNPSTPSRKITYKELHLEVCRFANVLKKMGVKKGDVVTIYMPMIPDTAVAMLACARIGAVHSVVFAGFSPDSISDRILDGQCRFVITGDAGFRGSKVVALKENIDKALVKTPDVQKVLVVKYAGTTVDMKPGRDLWYHEEVKTVSDQCEPEPMDAEDPLFILYTSGSTGKPKGVMHTTGGYLVYASMTHQYVFDYHEDDIYWCSADVGWVTGHSYIVYGPLANGATSLFFEGVPNYPTPSRFWEVVDKHKVTIFYTSPTAIRSLMREGDAAVKTTSRKTLRLLGSVGEPINPEAWAWYHDVVGEGRCPVVDTWWQTETGGILITPLPGAIAQKPGSATLPFFGVQPKLLTNEGQEIHGPGEGVLVIADSWPGQMRTVYRNHERFEDTYFSNYPGYYFTGDGCRRDQDGYYWITGRVDDVINVSGHRLGTAEIESALVAHHKVAEAAVVGYPHDIKGQGIYAFVTLKSGETASEELRKELIQTVRKEIGPIATPDLIQWAPRLPKTRSGKIMRRILRKIAENHPDQLGDTTTLSEPAVVQELVDNRMNR.

Residues 190–193 (RGSK), T308, and N332 each bind CoA. ATP contacts are provided by residues 384–386 (GEP), 408–413 (DTWWQT), D497, and R512. S520 is a binding site for CoA. R523 is a binding site for ATP. Positions 534, 536, and 539 each coordinate Mg(2+). Residue R581 coordinates CoA. The residue at position 606 (K606) is an N6-acetyllysine.

It belongs to the ATP-dependent AMP-binding enzyme family. Requires Mg(2+) as cofactor. Acetylated. Deacetylation by the SIR2-homolog deacetylase activates the enzyme.

It catalyses the reaction acetate + ATP + CoA = acetyl-CoA + AMP + diphosphate. Catalyzes the conversion of acetate into acetyl-CoA (AcCoA), an essential intermediate at the junction of anabolic and catabolic pathways. AcsA undergoes a two-step reaction. In the first half reaction, AcsA combines acetate with ATP to form acetyl-adenylate (AcAMP) intermediate. In the second half reaction, it can then transfer the acetyl group from AcAMP to the sulfhydryl group of CoA, forming the product AcCoA. In Bdellovibrio bacteriovorus (strain ATCC 15356 / DSM 50701 / NCIMB 9529 / HD100), this protein is Acetyl-coenzyme A synthetase.